A 22-amino-acid chain; its full sequence is Hemoglobinase-like protein 2 (22 aa).

Belongs to the peptidase C13 family.

The catalysed reaction is Hydrolysis of proteins and small molecule substrates at -Asn-|-Xaa- bonds.. In Fasciola hepatica (Liver fluke), this protein is Hemoglobinase-like protein 2.